Reading from the N-terminus, the 438-residue chain is Gamma-glutamyl phosphate reductase (438 aa).

The protein belongs to the gamma-glutamyl phosphate reductase family.

It is found in the cytoplasm. It catalyses the reaction L-glutamate 5-semialdehyde + phosphate + NADP(+) = L-glutamyl 5-phosphate + NADPH + H(+). It participates in amino-acid biosynthesis; L-proline biosynthesis; L-glutamate 5-semialdehyde from L-glutamate: step 2/2. Functionally, catalyzes the NADPH-dependent reduction of L-glutamate 5-phosphate into L-glutamate 5-semialdehyde and phosphate. The product spontaneously undergoes cyclization to form 1-pyrroline-5-carboxylate. This Prochlorococcus marinus (strain MIT 9313) protein is Gamma-glutamyl phosphate reductase.